The chain runs to 301 residues: Diaminopimelate epimerase (301 aa).

The substrate site is built by Asn15, Gln47, and Asn67. The active-site Proton donor is Cys76. Substrate is bound by residues 77 to 78 (GN), Asn163, Asn197, and 215 to 216 (ER). Cys224 acts as the Proton acceptor in catalysis. 225–226 (GS) contacts substrate. The interval 280-301 (SGSLDPSTGLWSRDGTQEAGAR) is disordered.

This sequence belongs to the diaminopimelate epimerase family. In terms of assembly, homodimer.

Its subcellular location is the cytoplasm. The enzyme catalyses (2S,6S)-2,6-diaminopimelate = meso-2,6-diaminopimelate. It functions in the pathway amino-acid biosynthesis; L-lysine biosynthesis via DAP pathway; DL-2,6-diaminopimelate from LL-2,6-diaminopimelate: step 1/1. Catalyzes the stereoinversion of LL-2,6-diaminopimelate (L,L-DAP) to meso-diaminopimelate (meso-DAP), a precursor of L-lysine and an essential component of the bacterial peptidoglycan. This chain is Diaminopimelate epimerase, found in Rhizobium leguminosarum bv. trifolii (strain WSM2304).